The chain runs to 237 residues: Phosphoadenosine 5'-phosphosulfate reductase (237 aa).

The active-site Nucleophile; cysteine thiosulfonate intermediate is cysteine 231.

The protein belongs to the PAPS reductase family. CysH subfamily.

It localises to the cytoplasm. It catalyses the reaction [thioredoxin]-disulfide + sulfite + adenosine 3',5'-bisphosphate + 2 H(+) = [thioredoxin]-dithiol + 3'-phosphoadenylyl sulfate. It functions in the pathway sulfur metabolism; hydrogen sulfide biosynthesis; sulfite from sulfate: step 3/3. Its function is as follows. Catalyzes the formation of sulfite from phosphoadenosine 5'-phosphosulfate (PAPS) using thioredoxin as an electron donor. In Xylella fastidiosa (strain M12), this protein is Phosphoadenosine 5'-phosphosulfate reductase.